Consider the following 432-residue polypeptide: MGNNVVVLGTQWGDEGKGKIVDLLTERAKYVVRYQGGHNAGHTLVINGEKTVLHLIPSGILRENVTSIIGNGVVLSPAALMKEMKELEDRGIPVRERLLLSEACPLILDYHVALDNAREKARGAKAIGTTGRGIGPAYEDKVARRGLRVGDLFDKETFAEKLKEVMEYHNFQLVNYYKAEAVDYQKVLDDTMAVADILTSMVVDVSDLLDQARQRGDFVMFEGAQGTLLDIDHGTYPYVTSSNTTAGGVATGSGLGPRYVDYVLGILKAYSTRVGAGPFPTELFDETGEFLCKQGNEYGATTGRRRRTGWLDTVAVRRAVQLNSLSGFCLTKLDVLDGLKEVKLCVAYRMPDGREVTTTPLAADDWKGVEPIYETMPGWSESTFGVKDRSGLPQAALNYIKRIEELTGVPIDIISTGPDRTETMILRDPFDA.

Residues 13–19 (GDEGKGK) and 41–43 (GHT) contribute to the GTP site. Residue aspartate 14 is the Proton acceptor of the active site. Mg(2+)-binding residues include aspartate 14 and glycine 41. Residues 14-17 (DEGK), 39-42 (NAGH), threonine 130, arginine 144, glutamine 225, threonine 240, and arginine 304 each bind IMP. Catalysis depends on histidine 42, which acts as the Proton donor. Residue 300–306 (ATTGRRR) coordinates substrate. GTP is bound by residues arginine 306, 332–334 (KLD), and 415–417 (STG).

The protein belongs to the adenylosuccinate synthetase family. Homodimer. Requires Mg(2+) as cofactor.

It is found in the cytoplasm. It carries out the reaction IMP + L-aspartate + GTP = N(6)-(1,2-dicarboxyethyl)-AMP + GDP + phosphate + 2 H(+). It functions in the pathway purine metabolism; AMP biosynthesis via de novo pathway; AMP from IMP: step 1/2. In terms of biological role, plays an important role in the de novo pathway of purine nucleotide biosynthesis. Catalyzes the first committed step in the biosynthesis of AMP from IMP. In Salmonella heidelberg (strain SL476), this protein is Adenylosuccinate synthetase.